A 189-amino-acid chain; its full sequence is Recombination protein RecR (189 aa).

A C4-type zinc finger spans residues 48–63 (CQTCFHLSAEPTCEIC). One can recognise a Toprim domain in the interval 71 to 165 (GMLCVVADSR…EVSRIAYGLP (95 aa)).

It belongs to the RecR family.

May play a role in DNA repair. It seems to be involved in an RecBC-independent recombinational process of DNA repair. It may act with RecF and RecO. In Synechococcus sp. (strain CC9311), this protein is Recombination protein RecR.